Here is a 269-residue protein sequence, read N- to C-terminus: UPF0162 protein YchA (269 aa).

Belongs to the UPF0162 family.

This Escherichia coli O157:H7 protein is UPF0162 protein YchA (ychA).